A 171-amino-acid chain; its full sequence is Ribosome maturation factor RimM (171 aa).

A PRC barrel domain is found at 96-170; that stretch reads AEGEYYYHEI…LVTIHVMEGL (75 aa).

The protein belongs to the RimM family. As to quaternary structure, binds ribosomal protein uS19.

The protein localises to the cytoplasm. Functionally, an accessory protein needed during the final step in the assembly of 30S ribosomal subunit, possibly for assembly of the head region. Essential for efficient processing of 16S rRNA. May be needed both before and after RbfA during the maturation of 16S rRNA. It has affinity for free ribosomal 30S subunits but not for 70S ribosomes. The sequence is that of Ribosome maturation factor RimM from Bacillus mycoides (strain KBAB4) (Bacillus weihenstephanensis).